The chain runs to 521 residues: Occludin (521 aa).

At 1 to 66 (MSSRPFESPP…KWTSPPGVIR (66 aa)) the chain is on the cytoplasmic side. The region spanning 60–268 (SPPGVIRILS…IIFFAVKTRR (209 aa)) is the MARVEL domain. A helical transmembrane segment spans residues 67-89 (ILSMLVIVMCIAIFGCVASTLAW). At 90–134 (DRGYGTGLMGGSIGYPYGSGFGSYGTGYGYGFGYGYGYGGYTDPR) the chain is on the extracellular side. Residues 135-159 (AAKGFLLAMVAFCFIAALVIFVTSV) traverse the membrane as a helical segment. At 160–169 (IRSDISRTRR) the chain is on the cytoplasmic side. A helical membrane pass occupies residues 170–194 (YYLTVIILSAFLGVMMFIATIVYIM). Residues 195 to 242 (GVNPTAQASGSLYSSQIYAMCNQFYASTATGLYMDQYLYHYCVVDPQE) are Extracellular-facing. A disulfide bridge links cysteine 215 with cysteine 236. A helical transmembrane segment spans residues 243-264 (AIAIVLGFMVIVAFALIIFFAV). Topologically, residues 265–521 (KTRRKMDRYD…MVGDYDRQKT (257 aa)) are cytoplasmic. Serine 301 carries the phosphoserine modification. A disordered region spans residues 301–407 (SAGTQDMPPP…ETDYTTGGES (107 aa)). The residue at position 304 (threonine 304) is a Phosphothreonine. 3 positions are modified to phosphoserine: serine 312, serine 320, and serine 339. Position 367 is a phosphotyrosine (tyrosine 367). Phosphoserine occurs at positions 368 and 369. The segment covering 380–389 (APSKGRTGRP) has biased composition (basic residues). The segment covering 390–399 (KRLEQDHYET) has biased composition (basic and acidic residues). 2 positions are modified to phosphotyrosine: tyrosine 397 and tyrosine 401. 2 positions are modified to phosphothreonine; by PKC/PRKCH: threonine 402 and threonine 403. Residue serine 407 is modified to Phosphoserine. The OCEL domain occupies 413 to 521 (EDWIREYPPI…MVGDYDRQKT (109 aa)). Positions 424 to 488 (SDQQRQLYKR…EYNRLKQVKG (65 aa)) form a coiled coil. At serine 489 the chain carries Phosphoserine.

The protein belongs to the ELL/occludin family. Interacts with TJP1/ZO1. Interacts with VAPA. Interacts with CLDN1, CLDN6, CLDN9, CLDN11, CLDN12 and CLDN17. Interacts with PLSCR1. Interacts with LSR, ILDR1 and ILDR2. Interacts with TJP2/ZO2. Post-translationally, dephosphorylated by PTPRJ. Less-phosphorylated forms are found in basolateral membrane, cytosol and tight junction. More-heavily phosphorylated forms are concentrated exclusively in tight junction. As to expression, localized at tight junctions of both epithelial and endothelial cells.

Its subcellular location is the cell membrane. It is found in the cell junction. The protein resides in the tight junction. Its function is as follows. May play a role in the formation and regulation of the tight junction (TJ) paracellular permeability barrier. Interacts with ZO-1. The sequence is that of Occludin (OCLN) from Canis lupus familiaris (Dog).